A 309-amino-acid chain; its full sequence is Low density lipoprotein receptor adapter protein 1-B (309 aa).

In terms of domain architecture, PID spans 41 to 195 (LLEGMLFHLK…SDGEGASSSQ (155 aa)). The tract at residues 179–201 (DKREKSGSDGEGASSSQSDGSSS) is disordered. A compositionally biased stretch (low complexity) spans 189 to 201 (EGASSSQSDGSSS). A Clathrin box motif is present at residues 213-217 (LLDFE). Positions 250–277 (WELDDGLDEAFARLAESRTNPQVLDIGL) are AP-2 complex binding. The [DE]-X(1,2)-F-X-X-[FL]-X-X-X-R motif motif lies at 258 to 267 (EAFARLAESR).

Interacts (via PID domain) with ldlr (via NPXY motif). Binds to soluble clathrin trimers and to the adapter protein complex 2 (AP-2, beta 2 subunit). Binds to phosphoinositides, which regulate clathrin bud assembly at the cell surface. Interacts with the VLDL receptor (vldlr). Interacts with the vitellogenin receptor. In terms of tissue distribution, expressed at high level during oogenesis and embryogenesis. Found at low level in the adult liver and spleen. Found at very low level in testis and heart. Not found in the oocyte vegetal cortex.

The protein localises to the cytoplasm. Its function is as follows. Adapter protein (clathrin-associated sorting protein (CLASP)) required for efficient endocytosis of the LDL receptor (LDLR). Also involved in the vitellogenin receptor mediated endocytosis of nutrients during oogenesis. In Xenopus laevis (African clawed frog), this protein is Low density lipoprotein receptor adapter protein 1-B.